The primary structure comprises 349 residues: UPF0283 membrane protein Ent638_2153 (349 aa).

3 helical membrane passes run 70–90 (MVTA…VQWT), 99–119 (WVAL…VGSV), and 213–233 (ESTL…FIAW).

It belongs to the UPF0283 family.

It is found in the cell inner membrane. The chain is UPF0283 membrane protein Ent638_2153 from Enterobacter sp. (strain 638).